The sequence spans 209 residues: 2-phospho-L-lactate guanylyltransferase (209 aa).

It belongs to the CofC family. Homodimer.

The catalysed reaction is (2S)-2-phospholactate + GTP + H(+) = (2S)-lactyl-2-diphospho-5'-guanosine + diphosphate. The protein operates within cofactor biosynthesis; coenzyme F420 biosynthesis. In terms of biological role, guanylyltransferase that catalyzes the activation of (2S)-2-phospholactate (2-PL) as (2S)-lactyl-2-diphospho-5'-guanosine, via the condensation of 2-PL with GTP. It is involved in the biosynthesis of coenzyme F420, a hydride carrier cofactor. The polypeptide is 2-phospho-L-lactate guanylyltransferase (Halobacterium salinarum (strain ATCC 29341 / DSM 671 / R1)).